We begin with the raw amino-acid sequence, 440 residues long: tRNA-2-methylthio-N(6)-dimethylallyladenosine synthase (440 aa).

The region spanning Lys-5 to Thr-121 is the MTTase N-terminal domain. Residues Cys-14, Cys-50, Cys-84, Cys-159, Cys-163, and Cys-166 each coordinate [4Fe-4S] cluster. Positions Ala-145–Asp-378 constitute a Radical SAM core domain. Positions Asp-378–Asp-440 constitute a TRAM domain.

It belongs to the methylthiotransferase family. MiaB subfamily. Monomer. [4Fe-4S] cluster is required as a cofactor.

Its subcellular location is the cytoplasm. The catalysed reaction is N(6)-dimethylallyladenosine(37) in tRNA + (sulfur carrier)-SH + AH2 + 2 S-adenosyl-L-methionine = 2-methylsulfanyl-N(6)-dimethylallyladenosine(37) in tRNA + (sulfur carrier)-H + 5'-deoxyadenosine + L-methionine + A + S-adenosyl-L-homocysteine + 2 H(+). In terms of biological role, catalyzes the methylthiolation of N6-(dimethylallyl)adenosine (i(6)A), leading to the formation of 2-methylthio-N6-(dimethylallyl)adenosine (ms(2)i(6)A) at position 37 in tRNAs that read codons beginning with uridine. The polypeptide is tRNA-2-methylthio-N(6)-dimethylallyladenosine synthase (Ruegeria sp. (strain TM1040) (Silicibacter sp.)).